The following is a 602-amino-acid chain: Potassium-transporting ATPase potassium-binding subunit (602 aa).

10 consecutive transmembrane segments (helical) span residues 3 to 23, 64 to 84, 135 to 155, 178 to 198, 282 to 302, 313 to 333, 418 to 438, 456 to 476, 522 to 542, and 565 to 585; these read ANNLLQAAIFIVVLIAAAVPV, QYALATVAFNALGVLFLYALL, GLTVQNFLSAATGIVVVLALI, LYVLVPMAAIIAALLMSQGVI, FSNFLEIFAILIIPAALCLVF, VAVLAAMTVALAAAIGIETSA, GLYGMLVFALLAVFVAGLMIG, VSIVVLLTPLLVLVGTSIAVL, WMTAIAMWFGRFGTIVPVLAI, and LFVVLLLGTVLLVGALTYMPA.

The protein belongs to the KdpA family. As to quaternary structure, the system is composed of three essential subunits: KdpA, KdpB and KdpC.

The protein localises to the cell inner membrane. In terms of biological role, part of the high-affinity ATP-driven potassium transport (or Kdp) system, which catalyzes the hydrolysis of ATP coupled with the electrogenic transport of potassium into the cytoplasm. This subunit binds the periplasmic potassium ions and delivers the ions to the membrane domain of KdpB through an intramembrane tunnel. The chain is Potassium-transporting ATPase potassium-binding subunit from Burkholderia pseudomallei (strain K96243).